The following is a 193-amino-acid chain: Anthranilate synthase component 2 (193 aa).

Positions 3–193 (DILLLDNVDS…EQTLAWALAK (191 aa)) constitute a Glutamine amidotransferase type-1 domain. Residue 57-59 (GPG) participates in L-glutamine binding. Cys84 functions as the Nucleophile; for GATase activity in the catalytic mechanism. L-glutamine-binding positions include Gln88 and 134-135 (SL). Residues His170 and Glu172 each act as for GATase activity in the active site.

As to quaternary structure, heterotetramer consisting of two non-identical subunits: a beta subunit (TrpG) and a large alpha subunit (TrpE).

The catalysed reaction is chorismate + L-glutamine = anthranilate + pyruvate + L-glutamate + H(+). The protein operates within amino-acid biosynthesis; L-tryptophan biosynthesis; L-tryptophan from chorismate: step 1/5. In terms of biological role, part of a heterotetrameric complex that catalyzes the two-step biosynthesis of anthranilate, an intermediate in the biosynthesis of L-tryptophan. In the first step, the glutamine-binding beta subunit (TrpG) of anthranilate synthase (AS) provides the glutamine amidotransferase activity which generates ammonia as a substrate that, along with chorismate, is used in the second step, catalyzed by the large alpha subunit of AS (TrpE) to produce anthranilate. In the absence of TrpG, TrpE can synthesize anthranilate directly from chorismate and high concentrations of ammonia. The protein is Anthranilate synthase component 2 (trpG) of Serratia marcescens.